Here is a 511-residue protein sequence, read N- to C-terminus: Probable dolichyl pyrophosphate Glc1Man9GlcNAc2 alpha-1,3-glucosyltransferase (511 aa).

Transmembrane regions (helical) follow at residues 4–24 (LFWH…PAYH), 94–112 (VYFQ…VLGV), 124–144 (DTQQ…LIFV), 151–171 (YNGL…RQRF), 210–230 (VVSA…PFAV), 300–320 (PAIT…PILV), 332–352 (LVFL…GWHV), 356–370 (AILM…LTLV), 377–394 (YAYV…PLLF), 432–452 (WLYM…SFLL), and 469–491 (YSAL…ISWG).

Belongs to the ALG6/ALG8 glucosyltransferase family.

It localises to the endoplasmic reticulum membrane. It carries out the reaction an alpha-D-Glc-(1-&gt;3)-alpha-D-Man-(1-&gt;2)-alpha-D-Man-(1-&gt;2)-alpha-D-Man-(1-&gt;3)-[alpha-D-Man-(1-&gt;2)-alpha-D-Man-(1-&gt;3)-[alpha-D-Man-(1-&gt;2)-alpha-D-Man-(1-&gt;6)]-alpha-D-Man-(1-&gt;6)]-beta-D-Man-(1-&gt;4)-beta-D-GlcNAc-(1-&gt;4)-alpha-D-GlcNAc-diphospho-di-trans,poly-cis-dolichol + a di-trans,poly-cis-dolichyl beta-D-glucosyl phosphate = an alpha-D-Glc-(1-&gt;3)-alpha-D-Glc-(1-&gt;3)-alpha-D-Man-(1-&gt;2)-alpha-D-Man-(1-&gt;2)-alpha-D-Man-(1-&gt;3)-[alpha-D-Man-(1-&gt;2)-alpha-D-Man-(1-&gt;3)-[alpha-D-Man-(1-&gt;2)-alpha-D-Man-(1-&gt;6)]-alpha-D-Man-(1-&gt;6)]-beta-D-Man-(1-&gt;4)-beta-D-GlcNAc-(1-&gt;4)-alpha-D-GlcNAc-diphospho-di-trans,poly-cis-dolichol + a di-trans,poly-cis-dolichyl phosphate + H(+). The protein operates within protein modification; protein glycosylation. Its function is as follows. Adds the second glucose residue to the lipid-linked oligosaccharide precursor for N-linked glycosylation. Transfers glucose from dolichyl phosphate glucose (Dol-P-Glc) onto the lipid-linked oligosaccharide Glc(1)Man(9)GlcNAc(2)-PP-Dol. Functions in developmental processes such as germband extension, the apical constriction of mesoderm precursor cells and ventral furrow formation in early embryogenesis prior to gastrulation. Involved in the glycosylation and intracellular distribution of shg (E-cadherin). Function in cell intercalation in the lateral epidermis during germband extension may be due to its effect on shg. The protein is Probable dolichyl pyrophosphate Glc1Man9GlcNAc2 alpha-1,3-glucosyltransferase of Drosophila melanogaster (Fruit fly).